The following is a 444-amino-acid chain: D(2) dopamine receptor (444 aa).

Over 1–37 (MDPLNLSWYDDDLERQNWSRPFNGSEGKADRPHYNYY) the chain is Extracellular. 3 N-linked (GlcNAc...) asparagine glycosylation sites follow: asparagine 5, asparagine 17, and asparagine 23. A helical membrane pass occupies residues 38–60 (AMLLTLLIFIIVFGNVLVCMAVS). The Cytoplasmic segment spans residues 61–70 (REKALQTTTN). Residues 71–93 (YLIVSLAVADLLVATLVMPWVVY) traverse the membrane as a helical segment. Topologically, residues 94–108 (LEVVGEWKFSRIHCD) are extracellular. Cysteine 107 and cysteine 182 are joined by a disulfide. The chain crosses the membrane as a helical span at residues 109 to 130 (IFVTLDVMMCTASILNLCAISI). At 131–151 (DRYTAVAMPMLYNTRYSSKRR) the chain is on the cytoplasmic side. The helical transmembrane segment at 152 to 172 (VTVMIAIVWVLSFTISCPLLF) threads the bilayer. Residues 173–188 (GLNNTDQNECIIANPA) lie on the Extracellular side of the membrane. The chain crosses the membrane as a helical span at residues 189 to 213 (FVVYSSIVSFYVPFIVTLLVYIKIY). The tract at residues 211–374 (KIYIVLRKRR…SQQKEKKATQ (164 aa)) is interaction with PPP1R9B. Over 214 to 374 (IVLRKRRKRV…SQQKEKKATQ (161 aa)) the chain is Cytoplasmic. The interval 282–329 (EMLSSTSPPERTRYSPIPPSHHQLTLPDPSHHGLHSNPDSPAKPEKNG) is disordered. A helical transmembrane segment spans residues 375–396 (MLAIVLGVFIICWLPFFITHIL). The Extracellular segment spans residues 397–410 (NIHCDCNIPPVLYS). A disulfide bridge links cysteine 400 with cysteine 402. The chain crosses the membrane as a helical span at residues 411–432 (AFTWLGYVNSAVNPIIYTTFNI). The Cytoplasmic segment spans residues 433–444 (EFRKAFMKILHC). Residue cysteine 444 is the site of S-palmitoyl cysteine attachment.

The protein belongs to the G-protein coupled receptor 1 family. As to quaternary structure, forms homo- and heterooligomers with DRD4. The interaction with DRD4 may modulate agonist-induced downstream signaling. Interacts with CADPS and CADPS2. Interacts with GPRASP1, PPP1R9B and CLIC6. Interacts with ARRB2. Interacts with HTR2A. Interacts with DRD1. Interacts with KCNA2. Post-translationally, palmitoylated. Palmitoylation which is required for proper localization to the plasma membrane and stability of the receptor could be carried on by ZDHHC4, ZDHHC3 and ZDHHC8. Expressed in the anterior lobe of the pituitary gland. Expressed ventral tegmental area of the midbrain and the pars compacta of the substantia nigra. Expressed seven times more than isoform short in the caudate nucleus. In terms of tissue distribution, expressed in the anterior lobe of the pituitary gland. Expressed in the caudate nucleus. Not expressed in the wider brain.

The protein localises to the cell membrane. Its subcellular location is the golgi apparatus membrane. Its function is as follows. Dopamine receptor whose activity is mediated by G proteins which inhibit adenylyl cyclase. Positively regulates postnatal regression of retinal hyaloid vessels via suppression of VEGFR2/KDR activity, downstream of OPN5. The polypeptide is D(2) dopamine receptor (Drd2) (Rattus norvegicus (Rat)).